The primary structure comprises 483 residues: MKLTREKWENNFSEWFDWVIREAEIYDYGRYPVKGMGVWLPYGFKIRQAAVDLIRKLLDAKGHEEVLFPLLVPEDLLRREGEHIKGFESEVFWVTKGGEENLDIRLALRPTSETAITYMETYWVQSYKQLPKKYYQIVSVFRYETKATRPMIRLREVSTFKEAHTLHETYEDAERQVKEAIEIYKNFFEELGIPYIMSQRPEWDKFAGAIYTIAFDTIMPDSRVLQIGTVHHLGQHFTKAFDLKVQRKDGTLDYPHQTSYGISDRVIAVAVSINGDDHGTILSPVLAPIKAVIIPIPAKDEKETEKIIEYSEDVAKILVSNGINTVIDKDTEKTPGEKYYIWEIKGVPLRIEIGPRELSSNSVFIKRRDTLQGISVKKENLVSEVVKLLETLRKDLKERAWNFLRSKIRYTDNLEEAKKMLDSKAGIVEVPWCESNECGLKIEETTGARVLGKPYDSPRDVSKSTCVVCKKPAKTTLRLAKTY.

It belongs to the class-II aminoacyl-tRNA synthetase family. ProS type 3 subfamily. In terms of assembly, homodimer.

It is found in the cytoplasm. The enzyme catalyses tRNA(Pro) + L-proline + ATP = L-prolyl-tRNA(Pro) + AMP + diphosphate. Its function is as follows. Catalyzes the attachment of proline to tRNA(Pro) in a two-step reaction: proline is first activated by ATP to form Pro-AMP and then transferred to the acceptor end of tRNA(Pro). The chain is Proline--tRNA ligase from Sulfolobus acidocaldarius (strain ATCC 33909 / DSM 639 / JCM 8929 / NBRC 15157 / NCIMB 11770).